A 550-amino-acid chain; its full sequence is Rab GTPase-activating protein 22 (550 aa).

The segment at 1–49 (MKALRRSYTSTSSGNSSSSSSLPSSSSSSLPSSSSSSPPSSNSNSYSNS) is disordered. The segment covering 7-49 (SYTSTSSGNSSSSSSLPSSSSSSLPSSSSSSPPSSNSNSYSNS) has biased composition (low complexity). Residues 126–460 (GVDPSIRAEV…CLWEVMWADQ (335 aa)) form the Rab-GAP TBC domain.

In terms of assembly, interacts with AGT1 in peroxisome under biotic stress conditions. As to expression, expressed in root meristems, vascular tissues, guard cells, trichomes, styles and receptacles.

Its subcellular location is the nucleus. The protein localises to the peroxisome. In terms of biological role, involved in defense response against fungal and bacterial pathogens. Acts as a negative regulator of jasmonate (JA) responses during infection by the soil-born fungal pathogen Verticillium longisporum. Involved in abscisic acid-dependent stomata closure in response to infection by V.longisporum and Pseudomonas syringae. May be a downstream component of brassinosteroid-mediated signaling. The protein is Rab GTPase-activating protein 22 of Arabidopsis thaliana (Mouse-ear cress).